The primary structure comprises 211 residues: Phosphoserine phosphatase (211 aa).

The active-site Nucleophile is D11. Mg(2+) is bound by residues D11 and D13. D13 functions as the Proton donor in the catalytic mechanism. Substrate-binding positions include E20, R56, 99–100 (SG), and K144. D167 is a binding site for Mg(2+). N170 is a substrate binding site.

The protein belongs to the HAD-like hydrolase superfamily. SerB family. It depends on Mg(2+) as a cofactor.

The enzyme catalyses O-phospho-L-serine + H2O = L-serine + phosphate. It catalyses the reaction O-phospho-D-serine + H2O = D-serine + phosphate. It participates in amino-acid biosynthesis; L-serine biosynthesis; L-serine from 3-phospho-D-glycerate: step 3/3. This chain is Phosphoserine phosphatase, found in Methanocaldococcus jannaschii (strain ATCC 43067 / DSM 2661 / JAL-1 / JCM 10045 / NBRC 100440) (Methanococcus jannaschii).